Here is a 237-residue protein sequence, read N- to C-terminus: MSNAYKRVLLKLSGEALMGDDAFGINRATIERMVADIAEVVGLGTQLAVVIGGGNIFRGVAGGAAGMDRATADYMGMLATMMNALALQDAMRHAGIVARVQSALRMDQVVEPYIRPRAIRQLEEGKVVIFAAGTGNPFFTTDTAAALRGSEVGAEVVLKATKVDGVYSADPKKDPSATRYTTISFDEAISRNLQVMDATAFALCRDQKLPIRVFSINKPGALKRIVLGEDEGTLVHV.

11 to 14 contacts ATP; that stretch reads KLSG. Gly53 is a UMP binding site. 2 residues coordinate ATP: Gly54 and Arg58. Residues Asp73 and 134–141 each bind UMP; that span reads TGNPFFTT. Positions 161, 167, and 170 each coordinate ATP.

This sequence belongs to the UMP kinase family. In terms of assembly, homohexamer.

The protein localises to the cytoplasm. The catalysed reaction is UMP + ATP = UDP + ADP. The protein operates within pyrimidine metabolism; CTP biosynthesis via de novo pathway; UDP from UMP (UMPK route): step 1/1. Its activity is regulated as follows. Inhibited by UTP. Its function is as follows. Catalyzes the reversible phosphorylation of UMP to UDP. The sequence is that of Uridylate kinase from Burkholderia vietnamiensis (strain G4 / LMG 22486) (Burkholderia cepacia (strain R1808)).